Here is a 255-residue protein sequence, read N- to C-terminus: Arginine-binding extracellular protein ArtP (255 aa).

The N-terminal stretch at 1–19 (MKKWLLLLVAACITFALTA) is a signal peptide. The N-palmitoyl cysteine moiety is linked to residue C20. C20 carries S-diacylglycerol cysteine lipidation.

It belongs to the bacterial solute-binding protein 3 family.

The protein localises to the cell membrane. Part of a binding-protein-dependent transport system for arginine. The chain is Arginine-binding extracellular protein ArtP (artP) from Bacillus subtilis (strain 168).